A 1122-amino-acid polypeptide reads, in one-letter code: Cytosolic carboxypeptidase 4 (1122 aa).

Residues 287-338 (PGSTSSELPLNLTEEDFDDDGDEEMDKDSDVEAVKEDDDLETDLSKLSSKPG) are disordered. A compositionally biased stretch (acidic residues) spans 299–313 (TEEDFDDDGDEEMDK). The region spanning 731 to 1021 (YPYTYSTLMT…MYCLGLLILE (291 aa)) is the Peptidase M14 domain. 3 residues coordinate Zn(2+): H803, E806, and H900. Catalysis depends on E985, which acts as the Proton donor/acceptor. Residues 1099-1122 (CALNKDEEEEEKEEGTGWRRRSVT) form a disordered region.

It belongs to the peptidase M14 family. As to quaternary structure, interacts with MYLK. Interacts with TCF4. Zn(2+) is required as a cofactor. As to expression, widely expressed at low level. Expressed in eye, muscle, pituitary, testis and to a lower extent in brain.

The protein localises to the cytoplasm. Its subcellular location is the cytosol. It carries out the reaction (L-glutamyl)(n+1)-gamma-L-glutamyl-L-glutamyl-[protein] + H2O = (L-glutamyl)(n)-gamma-L-glutamyl-L-glutamyl-[protein] + L-glutamate. It catalyses the reaction C-terminal L-alpha-aminoacyl-L-glutamyl-L-glutamyl-[tubulin] + H2O = C-terminal L-alpha-aminoacyl-L-glutamyl-[tubulin] + L-glutamate. Its function is as follows. Metallocarboxypeptidase that mediates deglutamylation of tubulin and non-tubulin target proteins. Catalyzes the removal of polyglutamate side chains present on the gamma-carboxyl group of glutamate residues within the C-terminal tail of tubulin protein. Specifically cleaves tubulin long-side-chains, while it is not able to remove the branching point glutamate. Also catalyzes the removal of polyglutamate residues from the carboxy-terminus of non-tubulin proteins such as MYLK. The polypeptide is Cytosolic carboxypeptidase 4 (Mus musculus (Mouse)).